The primary structure comprises 357 residues: Uroporphyrinogen decarboxylase (357 aa).

Substrate contacts are provided by residues 34–38, Asp83, Tyr158, Ser213, and His336; that span reads RQAGR.

It belongs to the uroporphyrinogen decarboxylase family. In terms of assembly, homodimer.

It localises to the cytoplasm. The catalysed reaction is uroporphyrinogen III + 4 H(+) = coproporphyrinogen III + 4 CO2. The protein operates within porphyrin-containing compound metabolism; protoporphyrin-IX biosynthesis; coproporphyrinogen-III from 5-aminolevulinate: step 4/4. Catalyzes the decarboxylation of four acetate groups of uroporphyrinogen-III to yield coproporphyrinogen-III. In Mycolicibacterium paratuberculosis (strain ATCC BAA-968 / K-10) (Mycobacterium paratuberculosis), this protein is Uroporphyrinogen decarboxylase.